Reading from the N-terminus, the 318-residue chain is Cobalamin biosynthesis protein CobD (318 aa).

Helical transmembrane passes span 51-71, 77-97, 153-173, 206-226, and 296-316; these read VGGV…AWGA, LVHP…CLAA, DGVI…ALAY, LIPA…AGLS, and MYGA…ILTI.

This sequence belongs to the CobD/CbiB family.

It is found in the cell membrane. The protein operates within cofactor biosynthesis; adenosylcobalamin biosynthesis. Functionally, converts cobyric acid to cobinamide by the addition of aminopropanol on the F carboxylic group. The polypeptide is Cobalamin biosynthesis protein CobD (Geobacter metallireducens (strain ATCC 53774 / DSM 7210 / GS-15)).